A 182-amino-acid polypeptide reads, in one-letter code: Large ribosomal subunit protein bL17 (182 aa).

The tract at residues 126 to 182 (ERANRVAASKAKKAEAEAAEAKAEEAEEAPEVEADTATDKAAEAEAAEAADEAAEDK) is disordered. Basic and acidic residues predominate over residues 137–149 (KKAEAEAAEAKAE). 2 stretches are compositionally biased toward acidic residues: residues 150–161 (EAEEAPEVEADT) and 170–182 (EAAE…AEDK).

Belongs to the bacterial ribosomal protein bL17 family. Part of the 50S ribosomal subunit. Contacts protein L32.

This chain is Large ribosomal subunit protein bL17, found in Corynebacterium jeikeium (strain K411).